Here is a 304-residue protein sequence, read N- to C-terminus: Aspartate carbamoyltransferase catalytic subunit (304 aa).

Residues Arg-49 and Thr-50 each contribute to the carbamoyl phosphate site. Position 77 (Lys-77) interacts with L-aspartate. 3 residues coordinate carbamoyl phosphate: Arg-99, His-127, and Gln-130. Residues Arg-160 and Arg-211 each coordinate L-aspartate. Ala-252 and Pro-253 together coordinate carbamoyl phosphate.

It belongs to the aspartate/ornithine carbamoyltransferase superfamily. ATCase family. As to quaternary structure, heterododecamer (2C3:3R2) of six catalytic PyrB chains organized as two trimers (C3), and six regulatory PyrI chains organized as three dimers (R2).

It catalyses the reaction carbamoyl phosphate + L-aspartate = N-carbamoyl-L-aspartate + phosphate + H(+). The protein operates within pyrimidine metabolism; UMP biosynthesis via de novo pathway; (S)-dihydroorotate from bicarbonate: step 2/3. In terms of biological role, catalyzes the condensation of carbamoyl phosphate and aspartate to form carbamoyl aspartate and inorganic phosphate, the committed step in the de novo pyrimidine nucleotide biosynthesis pathway. This Bacillus cytotoxicus (strain DSM 22905 / CIP 110041 / 391-98 / NVH 391-98) protein is Aspartate carbamoyltransferase catalytic subunit.